The sequence spans 142 residues: ATP synthase epsilon chain (142 aa).

The protein belongs to the ATPase epsilon chain family. In terms of assembly, F-type ATPases have 2 components, CF(1) - the catalytic core - and CF(0) - the membrane proton channel. CF(1) has five subunits: alpha(3), beta(3), gamma(1), delta(1), epsilon(1). CF(0) has three main subunits: a, b and c.

The protein localises to the cell inner membrane. Its function is as follows. Produces ATP from ADP in the presence of a proton gradient across the membrane. The chain is ATP synthase epsilon chain from Shewanella loihica (strain ATCC BAA-1088 / PV-4).